A 497-amino-acid polypeptide reads, in one-letter code: Probable cytosol aminopeptidase (497 aa).

Mn(2+)-binding residues include lysine 264 and aspartate 269. Lysine 276 is a catalytic residue. The Mn(2+) site is built by aspartate 287, aspartate 347, and glutamate 349. Residue arginine 351 is part of the active site.

This sequence belongs to the peptidase M17 family. Requires Mn(2+) as cofactor.

The protein localises to the cytoplasm. It catalyses the reaction Release of an N-terminal amino acid, Xaa-|-Yaa-, in which Xaa is preferably Leu, but may be other amino acids including Pro although not Arg or Lys, and Yaa may be Pro. Amino acid amides and methyl esters are also readily hydrolyzed, but rates on arylamides are exceedingly low.. The enzyme catalyses Release of an N-terminal amino acid, preferentially leucine, but not glutamic or aspartic acids.. Its function is as follows. Presumably involved in the processing and regular turnover of intracellular proteins. Catalyzes the removal of unsubstituted N-terminal amino acids from various peptides. This chain is Probable cytosol aminopeptidase, found in Thermosynechococcus vestitus (strain NIES-2133 / IAM M-273 / BP-1).